Reading from the N-terminus, the 636-residue chain is MTHTAAGAPRDAKTAIHAPSSRMALMLGALGVVYGDIGTSPLYTLRACLNTIDDLQPAHVLGVLSILFWLLMIVVSLKYVTLVLRADNRGEGGTLALLELAVRGREGRARWLLIVLGIFGAALFYGDSMITPAISVLSALEGISIVSHTLEPWVVPVALVVLVALFAIQSHGTGAVGKLFGPIMALWFATLAVLGGYQIWLTPEVLAALNPVWALRFIAEFPVMSFLLLGAVVLALTGAEALYADMGHFGRPAIRRAWFAMVLPALTLCYFGQGALLLRDPAAIRNPFFLMAPEWGLAALVGLATVATVVASQAVISGAFSVTRQAVQLGFWPRMQILHTSAVEKGQIYLPQVNALLLCAVLVLVLLFRNSENLAAAYGFAVTGTMLTTSVLAFAVLPRDSTGGKRVLWMVLLGALLVIDILLFGANIFKIHEGGWLPLLVGVVVFTLMMTWRRGRRLLADMQARDRQPLREFMTQLEAFPPARVQGTAIFMTMNAGNVPPALLHNLKHNKVLHDHVLFLSIRVADVPYVSEDERFEMHKISASSWQASINYGFKEDPDVPDALRQVAEAYPEIDLEPMRTSFYLSRQTVVAARRPAMARWRRALFAFMARNSTRSTRFFKIPPNRVVEMGMQVEL.

12 helical membrane-spanning segments follow: residues M23–Y43, P57–L77, W111–T131, H148–I168, L179–I199, F217–T237, W258–L278, P287–A307, I348–F368, A377–L397, W409–F429, and I431–T451.

It belongs to the HAK/KUP transporter (TC 2.A.72) family.

The protein resides in the cell inner membrane. The catalysed reaction is K(+)(in) + H(+)(in) = K(+)(out) + H(+)(out). Its function is as follows. Transport of potassium into the cell. Likely operates as a K(+):H(+) symporter. This Bordetella bronchiseptica (strain ATCC BAA-588 / NCTC 13252 / RB50) (Alcaligenes bronchisepticus) protein is Probable potassium transport system protein Kup.